Reading from the N-terminus, the 120-residue chain is Large ribosomal subunit protein bL19 (120 aa).

This sequence belongs to the bacterial ribosomal protein bL19 family.

This protein is located at the 30S-50S ribosomal subunit interface and may play a role in the structure and function of the aminoacyl-tRNA binding site. The polypeptide is Large ribosomal subunit protein bL19 (Geobacillus kaustophilus (strain HTA426)).